Here is a 94-residue protein sequence, read N- to C-terminus: Large ribosomal subunit protein uL24c (94 aa).

It belongs to the universal ribosomal protein uL24 family. As to quaternary structure, part of the 50S ribosomal subunit.

It localises to the plastid. The protein resides in the chloroplast. Its function is as follows. One of two assembly initiator proteins, it binds directly to the 5'-end of the 23S rRNA, where it nucleates assembly of the 50S subunit. The sequence is that of Large ribosomal subunit protein uL24c (rpl24) from Cyanidium caldarium (Red alga).